The primary structure comprises 396 residues: Ornithine aminotransferase (396 aa).

The residue at position 255 (K255) is an N6-(pyridoxal phosphate)lysine.

This sequence belongs to the class-III pyridoxal-phosphate-dependent aminotransferase family. OAT subfamily. It depends on pyridoxal 5'-phosphate as a cofactor.

Its subcellular location is the cytoplasm. The enzyme catalyses a 2-oxocarboxylate + L-ornithine = L-glutamate 5-semialdehyde + an L-alpha-amino acid. It participates in amino-acid biosynthesis; L-proline biosynthesis; L-glutamate 5-semialdehyde from L-ornithine: step 1/1. Its function is as follows. Catalyzes the interconversion of ornithine to glutamate semialdehyde. The protein is Ornithine aminotransferase of Bacillus cereus (strain 03BB102).